The following is a 447-amino-acid chain: MKNISLNIDKALGTVSKEQVYAQEAKAMECIATLHNGNGAGNDFLGWLHLPSSITDAELADIENTANVLRSKCEVVVAIGIGGSYLGTKAVVEALNNSFDWLQNDRKNPVMLYAGHNIGEDYLYELSEVLKGKQFGIINISKSGTTTEPALAFRILKKQLEDAVGKEEAKHRIVAITDAKRGALRTLADQEGYKTFIIPDNVGGRFSVLTPVGLLPIAVAGISIRDLVAGAVSMEKATDASVPFADNMAAIYAATRNELYKNGKKIEILANFHPKLHYIAEWWKQLYGESEGKDGKGIFPASVDLTTDLHSMGQWIQDGERTIFETVISVEATDHSVLVPTDEADLDGLNFLAGKHVDEVNKMAELGTQLAHVDGGVPNIKVNMPEVSAFYIGQLFYFFEKACGISGYMLGVNPFNQPGVEAYKKNMFALLNKPGYEKESEAIKARL.

Catalysis depends on Glu289, which acts as the Proton donor. Residues His310 and Lys424 contribute to the active site.

This sequence belongs to the GPI family.

It localises to the cytoplasm. The enzyme catalyses alpha-D-glucose 6-phosphate = beta-D-fructose 6-phosphate. The protein operates within carbohydrate biosynthesis; gluconeogenesis. Its pathway is carbohydrate degradation; glycolysis; D-glyceraldehyde 3-phosphate and glycerone phosphate from D-glucose: step 2/4. Functionally, catalyzes the reversible isomerization of glucose-6-phosphate to fructose-6-phosphate. The chain is Glucose-6-phosphate isomerase from Parabacteroides distasonis (strain ATCC 8503 / DSM 20701 / CIP 104284 / JCM 5825 / NCTC 11152).